The sequence spans 61 residues: Small ribosomal subunit protein uS14 (61 aa).

Zn(2+) is bound by residues cysteine 24, cysteine 27, cysteine 40, and cysteine 43.

Belongs to the universal ribosomal protein uS14 family. Zinc-binding uS14 subfamily. Part of the 30S ribosomal subunit. Contacts proteins S3 and S10. Zn(2+) serves as cofactor.

Functionally, binds 16S rRNA, required for the assembly of 30S particles and may also be responsible for determining the conformation of the 16S rRNA at the A site. The chain is Small ribosomal subunit protein uS14 from Dehalococcoides mccartyi (strain ATCC BAA-2266 / KCTC 15142 / 195) (Dehalococcoides ethenogenes (strain 195)).